A 371-amino-acid chain; its full sequence is Alanine dehydrogenase (371 aa).

Positions 15 and 74 each coordinate substrate. Histidine 95 acts as the Proton donor/acceptor in catalysis. Residues serine 133, 177–178 (QA), aspartate 197, serine 219, 238–239 (VL), 266–269 (IAID), arginine 279, and 298–301 (VANM) contribute to the NAD(+) site. The active-site Proton donor/acceptor is aspartate 269.

This sequence belongs to the AlaDH/PNT family. Homohexamer. Trimer of dimer.

It catalyses the reaction L-alanine + NAD(+) + H2O = pyruvate + NH4(+) + NADH + H(+). It participates in amino-acid degradation; L-alanine degradation via dehydrogenase pathway; NH(3) and pyruvate from L-alanine: step 1/1. In terms of biological role, catalyzes the reversible reductive amination of pyruvate to L-alanine. May play a role in cell wall synthesis as L-alanine is an important constituent of the peptidoglycan layer. In Staphylococcus saprophyticus subsp. saprophyticus (strain ATCC 15305 / DSM 20229 / NCIMB 8711 / NCTC 7292 / S-41), this protein is Alanine dehydrogenase (ald).